The following is a 486-amino-acid chain: LON peptidase N-terminal domain and RING finger protein C14F5.10c (486 aa).

Residues 169 to 207 form an RING-type zinc finger; sequence CQICFGMLYDPVVSPCGHTFCGPCLMQALTQSPQCPTCR. Residues 250-472 form the Lon N-terminal domain; it reads ESWLPLFISM…LVLIWLTQLQ (223 aa).

The polypeptide is LON peptidase N-terminal domain and RING finger protein C14F5.10c (Schizosaccharomyces pombe (strain 972 / ATCC 24843) (Fission yeast)).